The following is a 206-amino-acid chain: Stage III sporulation protein AF (206 aa).

Transmembrane regions (helical) follow at residues 1-21 and 34-54; these read MSFLTEWLTTIVLFILFAIVI and AKMVVSLLLIVVMLTPIFKLF.

Its subcellular location is the cell membrane. The chain is Stage III sporulation protein AF (spoIIIAF) from Bacillus subtilis (strain 168).